A 452-amino-acid polypeptide reads, in one-letter code: Bis(5'-adenosyl)-triphosphatase enpp4 (452 aa).

A signal peptide spans 1-19; sequence MFGRVFIVAVLYCITICKG. Topologically, residues 20-407 are extracellular; the sequence is EDPTNSSTPK…NQWCIQVSEA (388 aa). N-linked (GlcNAc...) asparagine glycosylation is present at Asn-24. Zn(2+) contacts are provided by Asp-36 and Thr-72. The active-site AMP-threonine intermediate is the Thr-72. Asn-93 contacts substrate. The N-linked (GlcNAc...) asparagine glycan is linked to Asn-107. Tyr-154 provides a ligand contact to substrate. N-linked (GlcNAc...) asparagine glycosylation is found at Asn-155 and Asn-175. Zn(2+)-binding residues include Asp-189 and His-193. Asp-189 lines the substrate pocket. An N-linked (GlcNAc...) asparagine glycan is attached at Asn-202. Zn(2+) contacts are provided by Asp-237 and His-238. A disulfide bond links Cys-254 and Cys-287. 2 N-linked (GlcNAc...) asparagine glycosylation sites follow: Asn-259 and Asn-327. His-336 is a Zn(2+) binding site. Asn-386 carries an N-linked (GlcNAc...) asparagine glycan. Cysteines 394 and 401 form a disulfide. The helical transmembrane segment at 408–428 threads the bilayer; the sequence is IGIVIGAIMVLTTLTCIIIML. Residues 429-452 are Cytoplasmic-facing; that stretch reads KKKMPSARPFSRLQFQDDDDPLIG.

Belongs to the nucleotide pyrophosphatase/phosphodiesterase family. Zn(2+) serves as cofactor.

The protein resides in the cell membrane. It carries out the reaction P(1),P(3)-bis(5'-adenosyl) triphosphate + H2O = AMP + ADP + 2 H(+). Its function is as follows. Hydrolyzes extracellular Ap3A into AMP and ADP, and Ap4A into AMP and ATP. Ap3A and Ap4A are diadenosine polyphosphates thought to induce proliferation of vascular smooth muscle cells. Acts as a procoagulant, mediating platelet aggregation at the site of nascent thrombus via release of ADP from Ap3A and activation of ADP receptors. The chain is Bis(5'-adenosyl)-triphosphatase enpp4 (enpp4) from Xenopus laevis (African clawed frog).